The sequence spans 575 residues: LMVVTSNADRICTGITSSNSPHVVKTATQGEVNVTGVIPLTTTPTKSHFANLKGTQTRGKLCPNCLNCTDLDVALGRPKCMGNIPSAKASILHEVKPGTSGCFPIMHDRTKIRQLPNLLRGYENIRLSARNVTNAETAPGGPYIVGTSGSCPNVTNGNGFFATMAWAVPKNKTATNPLTVEVPYICTKGEDQITVWGFHSDDETQMVKLYGDSKPQKFTSSANGVTTHYVSQIGGFPNQAEDEGLPQSGRIVVDYMVQKPGKTGTIAYQRGVLLPQKVWCASGRRKVIEGSLPLIGEADCLHEKYGGLNKSKPYYTGEHAKAIGNCPIWVKTPLKLANGTKYRPPAKLLKERGFFGAIAGFLEGGWEGMIAGWHGYTSHGAHGVAVAADLKSTQEAINKITKNLFSLSELEVKNLHRLSGAMDELHNEILELDEKVDDLRADTISSQIELAVLLSNEGIINSEDEHLLALERKLKKMLGPSAVEIGNGCFETKHKCNQTCLDRIAAGTFNAGEFSLPTFDSLNITAASLNDDGLDNHTILLYYSTAASSLAVTLMIAIFIVYMVSRDNVSCSICL.

Topologically, residues 1 to 543 (LMVVTSNADR…LDNHTILLYY (543 aa)) are extracellular. 4 disulfides stabilise this stretch: C12–C489, C68–C80, C102–C151, and C496–C500. Residues N33 and N67 are each glycosylated (N-linked (GlcNAc...) asparagine; by host). N131, N153, N171, N309, N338, N497, N523, and N536 each carry an N-linked (GlcNAc...) asparagine; by host glycan. The chain crosses the membrane as a helical span at residues 544–564 (STAASSLAVTLMIAIFIVYMV). Residues 565-575 (SRDNVSCSICL) lie on the Cytoplasmic side of the membrane. Residues C571 and C574 are each lipidated (S-palmitoyl cysteine; by host).

The protein belongs to the influenza viruses hemagglutinin family. As to quaternary structure, homotrimer of disulfide-linked HA1-HA2. Palmitoylated. In terms of processing, in natural infection, inactive HA is matured into HA1 and HA2 outside the cell by one or more trypsin-like, arginine-specific endoprotease secreted by the bronchial epithelial cells. One identified protease that may be involved in this process is secreted in lungs by club cells.

Its subcellular location is the virion membrane. It is found in the host apical cell membrane. Its function is as follows. Binds to sialic acid-containing receptors on the cell surface, bringing about the attachment of the virus particle to the cell. Plays a major role in the determination of host range restriction and virulence. Class I viral fusion protein. Responsible for penetration of the virus into the cell cytoplasm by mediating the fusion of the membrane of the endocytosed virus particle with the endosomal membrane. Low pH in endosomes induce an irreversible conformational change in HA2, releasing the fusion hydrophobic peptide. Several trimers are required to form a competent fusion pore. The chain is Hemagglutinin from Influenza B virus (strain B/Hong Kong/8/1973).